Consider the following 159-residue polypeptide: 17 kDa surface antigen (159 aa).

An N-terminal signal peptide occupies residues 1–19; sequence MKIISKIIVILLAASMLQA. C20 carries N-palmitoyl cysteine lipidation. Residue C20 is the site of S-diacylglycerol cysteine attachment.

This sequence belongs to the rickettsiale 17 kDa surface antigen family.

Its subcellular location is the cell outer membrane. The protein is 17 kDa surface antigen (omp) of Rickettsia bellii.